The primary structure comprises 237 residues: Ribosomal RNA small subunit methyltransferase G (237 aa).

S-adenosyl-L-methionine-binding positions include G78, F83, 129–130, and R148; that span reads AE.

This sequence belongs to the methyltransferase superfamily. RNA methyltransferase RsmG family.

The protein localises to the cytoplasm. Specifically methylates the N7 position of a guanine in 16S rRNA. The chain is Ribosomal RNA small subunit methyltransferase G from Streptococcus equi subsp. zooepidemicus (strain H70).